The sequence spans 123 residues: Signal recognition particle 14 kDa protein (123 aa).

The disordered stretch occupies residues 99 to 123 (KKKPTPTTTPSSSTTAKTAAKKTKV). A compositionally biased stretch (low complexity) spans 103–116 (TPTTTPSSSTTAKT).

Belongs to the SRP14 family. Heterodimer with srp9; binds RNA as heterodimer. Component of a signal recognition particle (SRP) complex that consists of a 7SL RNA molecule and six protein subunits: srp72, srp68, srp54, srp19, srp14 and srp9.

It is found in the cytoplasm. In terms of biological role, component of the signal recognition particle (SRP) complex, a ribonucleoprotein complex that mediates the cotranslational targeting of secretory and membrane proteins to the endoplasmic reticulum (ER). Srp9 together with srp14 and the Alu portion of the SRP RNA, constitutes the elongation arrest domain of SRP. The complex of srp9 and srp14 is required for SRP RNA binding. This chain is Signal recognition particle 14 kDa protein (srp14-1), found in Dictyostelium discoideum (Social amoeba).